The primary structure comprises 1390 residues: DNA-directed RNA polymerase subunit beta'' (1390 aa).

Zn(2+) contacts are provided by Cys220, Cys291, Cys298, and Cys301.

The protein belongs to the RNA polymerase beta' chain family. RpoC2 subfamily. In terms of assembly, in plastids the minimal PEP RNA polymerase catalytic core is composed of four subunits: alpha, beta, beta', and beta''. When a (nuclear-encoded) sigma factor is associated with the core the holoenzyme is formed, which can initiate transcription. Requires Zn(2+) as cofactor.

The protein localises to the plastid. It is found in the chloroplast. It catalyses the reaction RNA(n) + a ribonucleoside 5'-triphosphate = RNA(n+1) + diphosphate. Functionally, DNA-dependent RNA polymerase catalyzes the transcription of DNA into RNA using the four ribonucleoside triphosphates as substrates. This Populus alba (White poplar) protein is DNA-directed RNA polymerase subunit beta''.